A 184-amino-acid chain; its full sequence is Photosystem I assembly protein Ycf4 (184 aa).

2 helical membrane-spanning segments follow: residues phenylalanine 22–serine 42 and isoleucine 57–serine 77.

This sequence belongs to the Ycf4 family.

Its subcellular location is the plastid. It localises to the chloroplast thylakoid membrane. Seems to be required for the assembly of the photosystem I complex. In Chloranthus spicatus (Chulantree), this protein is Photosystem I assembly protein Ycf4.